The following is a 233-amino-acid chain: Outer membrane protein MIP (233 aa).

An N-terminal signal peptide occupies residues 1–20; the sequence is MKMKLVTAAVMGLAMSTAMA. The PPIase FKBP-type domain occupies 144–233; it reads SDTVTVEYTG…IHLISVKKSS (90 aa).

It belongs to the FKBP-type PPIase family.

The protein resides in the cell outer membrane. It catalyses the reaction [protein]-peptidylproline (omega=180) = [protein]-peptidylproline (omega=0). Its function is as follows. Essential virulence factor associated with macrophage infectivity. Exhibits PPIase activity. The sequence is that of Outer membrane protein MIP (mip) from Legionella pneumophila (strain Corby).